The sequence spans 723 residues: Transient receptor potential cation channel subfamily V member 5 (723 aa).

Residues 1–320 (MGAKTPWIQL…SLKWKKYGQP (320 aa)) lie on the Cytoplasmic side of the membrane. ANK repeat units follow at residues 38–68 (IWES…DFRQ), 72–101 (LGET…YLVT), 110–139 (VGQT…SASA), 156–185 (YGEH…DIRA), 189–222 (LGNT…GDHL), and 232–261 (QGLT…RIQW). Residues 321–341 (YFCLLGALYIFYMVCFTTCCV) traverse the membrane as a helical segment. Over 342–378 (YRPLKFRDANRTHVRDNTIMEQKSLQEAYVTYQDKIR) the chain is Extracellular. A helical membrane pass occupies residues 379–401 (LVGELVTVIGAVIILLLEIPDIF). Residues 402–412 (RVGASRYFGQT) are Extracellular-facing. The chain crosses the membrane as a helical span at residues 413 to 435 (VLGGPFHVIIITYASLVLLTMAM). Residues 436–441 (RLTNVN) are Cytoplasmic-facing. Residues 442–462 (GEVVPMSMALVLGWCSVMYFA) form a helical membrane-spanning segment. Topologically, residues 463-485 (RGFQMLGPFTIMIQKMIFGDLLR) are extracellular. The chain crosses the membrane as a helical span at residues 486–506 (FCWLMAMVILGFASAFYIIFQ). Positions 517–537 (SDYPTAMFSTFELFLTIIDGP) form an intramembrane region, pore-forming. Aspartate 535 is a Ca(2+) binding site. Residues 550-570 (VTYATFAIIATLLMLNLFIAM) traverse the membrane as a helical segment. At 571–723 (MGDTHWRVAQ…EGDGEEIYQF (153 aa)) the chain is on the cytoplasmic side. The interval 591–595 (VATTV) is interaction with S100A10. Residues 643–646 (AFKS) are involved in Ca(2+)-dependent inactivation. The interval 651 to 673 (EVQEQLSEKQPSGTETGTLARGS) is disordered. Over residues 654-667 (EQLSEKQPSGTETG) the composition is skewed to polar residues. Position 678 is a phosphothreonine (threonine 678). Serine 682 bears the Phosphoserine mark. The interval 693–723 (RGWEILRRNTLGHLNLGLDPGEGDGEEIYQF) is involved in Ca(2+)-dependent inactivation.

It belongs to the transient receptor (TC 1.A.4) family. TrpV subfamily. TRPV5 sub-subfamily. As to quaternary structure, homotetramer and probably heterotetramer with TRPV6. Interacts with TRPV6. Interacts with S100A10 and probably with the ANAX2-S100A10 heterotetramer. The interaction with S100A10 is required for the trafficking to the plasma membrane. Interacts with calmodulin. Interacts with BSPRY, which results in its inactivation. In terms of processing, glycosylated. As to expression, detected in kidney cortex (at protein level).

The protein resides in the apical cell membrane. The enzyme catalyses Ca(2+)(in) = Ca(2+)(out). Activated by WNK3. Its function is as follows. Constitutively active calcium selective cation channel thought to be involved in Ca(2+) reabsorption in kidney and intestine. Required for normal Ca(2+) reabsorption in the kidney distal convoluted tubules. The channel is activated by low internal calcium level and the current exhibits an inward rectification. A Ca(2+)-dependent feedback regulation includes fast channel inactivation and slow current decay. Heteromeric assembly with TRPV6 seems to modify channel properties. TRPV5-TRPV6 heteromultimeric concatemers exhibit voltage-dependent gating. In Mus musculus (Mouse), this protein is Transient receptor potential cation channel subfamily V member 5 (Trpv5).